A 418-amino-acid chain; its full sequence is Serine hydroxymethyltransferase (418 aa).

(6S)-5,6,7,8-tetrahydrofolate-binding positions include Leu121 and 125–127 (GHL). Position 230 is an N6-(pyridoxal phosphate)lysine (Lys230). Residue 355 to 357 (SPF) coordinates (6S)-5,6,7,8-tetrahydrofolate.

It belongs to the SHMT family. Homodimer. Requires pyridoxal 5'-phosphate as cofactor.

Its subcellular location is the cytoplasm. It carries out the reaction (6R)-5,10-methylene-5,6,7,8-tetrahydrofolate + glycine + H2O = (6S)-5,6,7,8-tetrahydrofolate + L-serine. The protein operates within one-carbon metabolism; tetrahydrofolate interconversion. It participates in amino-acid biosynthesis; glycine biosynthesis; glycine from L-serine: step 1/1. Functionally, catalyzes the reversible interconversion of serine and glycine with tetrahydrofolate (THF) serving as the one-carbon carrier. This reaction serves as the major source of one-carbon groups required for the biosynthesis of purines, thymidylate, methionine, and other important biomolecules. Also exhibits THF-independent aldolase activity toward beta-hydroxyamino acids, producing glycine and aldehydes, via a retro-aldol mechanism. This is Serine hydroxymethyltransferase from Methylococcus capsulatus (strain ATCC 33009 / NCIMB 11132 / Bath).